We begin with the raw amino-acid sequence, 94 residues long: Acylphosphatase (94 aa).

In terms of domain architecture, Acylphosphatase-like spans 8-94; that stretch reads RLTAWVHGRV…REQITGFHER (87 aa). Catalysis depends on residues Arg23 and Asn41.

Belongs to the acylphosphatase family.

It catalyses the reaction an acyl phosphate + H2O = a carboxylate + phosphate + H(+). This is Acylphosphatase (acyP) from Mycobacterium sp. (strain KMS).